The primary structure comprises 67 residues: Small ribosomal subunit protein bS21 (67 aa).

The protein belongs to the bacterial ribosomal protein bS21 family.

The chain is Small ribosomal subunit protein bS21 from Acidiphilium cryptum (strain JF-5).